The primary structure comprises 20 residues: Collagenolytic protease 28 kDa (20 aa).

The Peptidase S1 domain maps to 1-20; sequence IVGGQEASPGSWPXQVGLFF.

It belongs to the peptidase S1 family.

The enzyme catalyses Hydrolysis of proteins, with broad specificity for peptide bonds. Native collagen is cleaved about 75% of the length of the molecule from the N-terminus. Low activity on small molecule substrates of both trypsin and chymotrypsin.. This enzyme is a serine protease capable of degrading the native triple helix of collagen. This chain is Collagenolytic protease 28 kDa, found in Paralithodes camtschaticus (Red king crab).